The primary structure comprises 257 residues: 3-methyl-2-oxobutanoate hydroxymethyltransferase (257 aa).

Mg(2+)-binding residues include D42 and D86. 3-methyl-2-oxobutanoate is bound by residues D42 to S43, D86, and K116. E118 provides a ligand contact to Mg(2+). The Proton acceptor role is filled by E185.

It belongs to the PanB family. In terms of assembly, homodecamer; pentamer of dimers. Mg(2+) is required as a cofactor.

It localises to the cytoplasm. The enzyme catalyses 3-methyl-2-oxobutanoate + (6R)-5,10-methylene-5,6,7,8-tetrahydrofolate + H2O = 2-dehydropantoate + (6S)-5,6,7,8-tetrahydrofolate. Its pathway is cofactor biosynthesis; (R)-pantothenate biosynthesis; (R)-pantoate from 3-methyl-2-oxobutanoate: step 1/2. In terms of biological role, catalyzes the reversible reaction in which hydroxymethyl group from 5,10-methylenetetrahydrofolate is transferred onto alpha-ketoisovalerate to form ketopantoate. This chain is 3-methyl-2-oxobutanoate hydroxymethyltransferase, found in Prochlorococcus marinus (strain MIT 9515).